Here is a 505-residue protein sequence, read N- to C-terminus: MKKENLEEKPFLQMKGISKFFSGVQALDNVELKVYRGEVLALLGENGAGKSTLMKILSGVYTKDEGDIFIDEKKVDIKGIKEAEELGISIIHQELSLLSNLKIYENIFLGSEKYKGIFNKLDKDYMRSESEKLLSTIGFTADVDILAKDINIGEMQMIEIIKAISKKSKLIIMDEPTTALTEVETERLFKVINKLKSEGICIIYISHRLDEIFQICDRVNVLRDGKYVGEVKVKDTTKDDLITMMVGRKLEEQFPYKKVKKGDALLAVNNLSYKNKVKNISFEVRAGEILGLAGLMGSGRTELAKTIFGEYKKSSGDIYINDKKINITSPKEAIENGIAYLSEDRKKEGLILNMSVGNNISLCNLKKYENSIKKINKEKESKEIDDYIKKLSVKTPSANQIIKNLSGGNQQKAIIAKWIMISPNILIIDEPTRGIDVGAKKEIYEVLNEIKSLGKAIIMISSDMPEVLGISDRILVMSEGNLSGELSREEATQEKIMKYAVAFSN.

ABC transporter domains lie at 12–249 (LQMK…VGRK) and 259–504 (VKKG…VAFS). 44–51 (GENGAGKS) contributes to the ATP binding site.

The protein belongs to the ABC transporter superfamily. Ribose importer (TC 3.A.1.2.1) family. As to quaternary structure, the complex is composed of an ATP-binding protein (RbsA), two transmembrane proteins (RbsC) and a solute-binding protein (RbsB).

The protein resides in the cell membrane. The enzyme catalyses D-ribose(out) + ATP + H2O = D-ribose(in) + ADP + phosphate + H(+). Part of the ABC transporter complex RbsABC involved in ribose import. Responsible for energy coupling to the transport system. This Clostridium tetani (strain Massachusetts / E88) protein is Ribose import ATP-binding protein RbsA.